Reading from the N-terminus, the 247-residue chain is MQVEAHLQKIIDQDGKVHLTLIDPASQTPERAAEIALAAVEGGTDAIMIGGSTGASGTLLDETVIKIKEKVNVPTILFPGSSAGLSSYADAVFFMSLLNSRDLGYVITNQVLGAPLVYKSQIEPISMAYLVVEPGGTVGWVGDAKLIPRKKPDIAAVYALAGKYLGMHYTYLEAGSGADAPIPPEMIGAVKKVLGENKLIVGGGVRDAKTAKLCASAGADMIVTGTIVEEVKDVAAKVAEIVSAIKS.

Mg(2+)-binding residues include Asp-23 and Ser-52. Residues 171–177 (YLEAGSG), 203–204 (GG), and 225–226 (GT) contribute to the sn-glycerol 1-phosphate site.

The protein belongs to the GGGP/HepGP synthase family. Group II subfamily. Mg(2+) is required as a cofactor.

Its subcellular location is the cytoplasm. The enzyme catalyses sn-glycerol 1-phosphate + (2E,6E,10E)-geranylgeranyl diphosphate = sn-3-O-(geranylgeranyl)glycerol 1-phosphate + diphosphate. Its pathway is membrane lipid metabolism; glycerophospholipid metabolism. Its function is as follows. Prenyltransferase that catalyzes the transfer of the geranylgeranyl moiety of geranylgeranyl diphosphate (GGPP) to the C3 hydroxyl of sn-glycerol-1-phosphate (G1P). This reaction is the first ether-bond-formation step in the biosynthesis of archaeal membrane lipids. This is Geranylgeranylglyceryl phosphate synthase from Methanosarcina acetivorans (strain ATCC 35395 / DSM 2834 / JCM 12185 / C2A).